A 1091-amino-acid chain; its full sequence is Sodium/potassium exporting P-type ATPase 2 (1091 aa).

The Cytoplasmic portion of the chain corresponds to 1-63; the sequence is MSEGTVKENN…LGDDTKIDYK (63 aa). A helical transmembrane segment spans residues 64-84; that stretch reads AMVLHQVCNAMIMVLVISMAI. Residues 85–90 are Extracellular-facing; that stretch reads SFAVRD. Residues 91-111 form a helical membrane-spanning segment; sequence WITGGVISFVIAVNVLIGLVQ. Residues 112–282 lie on the Cytoplasmic side of the membrane; it reads EYKATKTMNS…TNVGTPLHRK (171 aa). The chain crosses the membrane as a helical span at residues 283–303; sequence LSKLAVLLFWIAVLFAIIVMA. Residues 304 to 312 are Extracellular-facing; sequence SQKFDVDKR. The helical transmembrane segment at 313–333 threads the bilayer; sequence VAIYAICVALSMIPSSLVVVL. Topologically, residues 334-815 are cytoplasmic; that stretch reads TITMSVGAAV…RRMTDNIQKF (482 aa). The active-site 4-aspartylphosphate intermediate is Asp369. Residues Asp369 and Thr371 each coordinate Mg(2+). ATP contacts are provided by Thr371 and Glu483. Residues 499–525 form a disordered region; sequence ALTGEKSTNQSNENDQSSLSQHNEKPG. A compositionally biased stretch (polar residues) spans 503 to 519; sequence EKSTNQSNENDQSSLSQ. Positions 561, 606, 673, 674, 675, 732, and 738 each coordinate ATP. Asp757 is a binding site for Mg(2+). Residue Asn760 participates in ATP binding. A helical transmembrane segment spans residues 816-836; that stretch reads VLQLLAENVAQALYLIIGLVF. Residues 837 to 848 lie on the Extracellular side of the membrane; the sequence is RDENGKSVFPLS. The helical transmembrane segment at 849–869 threads the bilayer; the sequence is PVEVLWIIVVTSCFPAMGLGL. Over 870–885 the chain is Cytoplasmic; the sequence is EKAAPDLMDRPPHDSE. The helical transmembrane segment at 886 to 906 threads the bilayer; sequence VGIFTWEVIIDTFAYGIIMTG. Topologically, residues 907 to 943 are extracellular; that stretch reads SCMASFTGSLYGINSGRLGHDCDGTYNSSCRDVYRSR. The chain crosses the membrane as a helical span at residues 944–964; it reads SAAFATMTWCALILAWEVVDM. The Cytoplasmic segment spans residues 965–991; sequence RRSFFRMHPDTDSPVKEFFRSIWGNQF. Residues 992–1012 form a helical membrane-spanning segment; it reads LFWSIIFGFVSAFPVVYIPVI. Over 1013 to 1021 the chain is Extracellular; the sequence is NDKVFLHKP. A helical transmembrane segment spans residues 1022 to 1042; that stretch reads IGAEWGLAIAFTIAFWIGAEL. At 1043–1091 the chain is on the cytoplasmic side; sequence YKCGKRRYFKTQRAHNPENDLESNNKRDPFEAYSTSTTIHTEVNIGIKQ.

The protein belongs to the cation transport ATPase (P-type) (TC 3.A.3) family. Type IID subfamily. The cofactor is Mg(2+). The active site is phosphorylated in presence of sodium or potassium and in conditions of higher pH. Not phosphorylated in presence of calcium ions.

It is found in the cell membrane. It catalyses the reaction Na(+)(in) + ATP + H2O = Na(+)(out) + ADP + phosphate + H(+). The enzyme catalyses K(+)(in) + ATP + H2O = K(+)(out) + ADP + phosphate + H(+). In terms of biological role, catalyzes the hydrolysis of ATP coupled with the export of sodium and potassium from the cell. May export potassium less efficiently. May transport other cations such as lithium. Sodium/potassium efflux ATPases are involved in salt tolerance and maintaining the membrane potential across the plasma membrane in high salinity (Na+) or alkaline (K+) environments. The protein is Sodium/potassium exporting P-type ATPase 2 of Saccharomyces cerevisiae (strain ATCC 204508 / S288c) (Baker's yeast).